We begin with the raw amino-acid sequence, 91 residues long: MKLPFIFLITLLIFVSSCTSILINESSDEERTYSFSPTTSPFDPRSLNQELKIGRIGYCFDCARACMRRGKYIRTCSFERKLCRCSISGIK.

Positions 1-20 (MKLPFIFLITLLIFVSSCTS) are cleaved as a signal peptide. Residue Asn24 is glycosylated (N-linked (GlcNAc...) asparagine). Cystine bridges form between Cys59/Cys76, Cys62/Cys83, and Cys66/Cys85. The tract at residues 68–88 (RRGKYIRTCSFERKLCRCSIS) is PRK6 binding.

Belongs to the DEFL family. Binds to PRK6 LRRs. Expressed in the pistil. Detected exclusively in the synergid cells.

It localises to the secreted. Pollen tube attractants guiding pollen tubes to the ovular micropyle. Attracts pollen tubes from both A.thaliana and A.lyrata. This chain is Protein LURE 1.3, found in Arabidopsis thaliana (Mouse-ear cress).